An 833-amino-acid chain; its full sequence is Leucine--tRNA ligase (833 aa).

The short motif at 41–52 (PYPSGAGLHVGH) is the 'HIGH' region element. Residues 610–614 (KMSKS) carry the 'KMSKS' region motif. Residue lysine 613 coordinates ATP.

The protein belongs to the class-I aminoacyl-tRNA synthetase family.

It localises to the cytoplasm. It carries out the reaction tRNA(Leu) + L-leucine + ATP = L-leucyl-tRNA(Leu) + AMP + diphosphate. The sequence is that of Leucine--tRNA ligase from Streptococcus pyogenes serotype M6 (strain ATCC BAA-946 / MGAS10394).